The sequence spans 241 residues: 15,16-dihydrobiliverdin:ferredoxin oxidoreductase (241 aa).

This sequence belongs to the HY2 family.

It catalyses the reaction 15,16-dihydrobiliverdin + oxidized 2[4Fe-4S]-[ferredoxin] = biliverdin IXalpha + reduced 2[4Fe-4S]-[ferredoxin] + 2 H(+). In terms of biological role, catalyzes the two-electron reduction of biliverdin IX-alpha at the C15 methine bridge. The polypeptide is 15,16-dihydrobiliverdin:ferredoxin oxidoreductase (pebA) (Prochlorococcus marinus (strain SARG / CCMP1375 / SS120)).